The following is a 595-amino-acid chain: Coronatine-insensitive protein homolog 1a (595 aa).

Positions 20–62 (WVPDEALHLVMGHVEDPRDREAASRVCRRWHRIDALTRKHVTV) constitute an F-box domain. Jasmonate-binding residues include Arg90, Arg351, Tyr389, Arg412, and Arg499.

In terms of assembly, interacts with TIFY6A/JAZ3, TIFY6B/JAZ4 and TIFY11D/JAZ12 in a coronatine-dependent manner. Interacts with TIFY9/JAZ5, TIFY10A/JAZ6, TIFY10B/JAZ7, TIFY11A/JAZ9 and TIFY11C/JAZ11 in a coronatine-dependent manner.

Involved in jasmonate (JA) signaling. Required for jasmonate signaling in plant defense responses. Can complement Arabidopsis coi1-1 mutant and restore jasmonate signaling. Required for JA-regulated defense responses to infestation by the leaffolder Cnaphalocrocis medinalis. May act on an initial response of jasmonate-regulated gene expression toward drought tolerance as part of a BHLH148-TIFY11D/JAZ12-COI1A complex. Component of SCF(COI1) E3 ubiquitin ligase complexes, which may mediate the ubiquitination and subsequent proteasomal degradation of target proteins, including TIFY/JAZ family. The polypeptide is Coronatine-insensitive protein homolog 1a (Oryza sativa subsp. indica (Rice)).